Consider the following 218-residue polypeptide: Small ribosomal subunit protein uS3c (218 aa).

Positions 47-118 constitute a KH type-2 domain; sequence VQKHMRISSG…RLNITITRIA (72 aa).

Belongs to the universal ribosomal protein uS3 family. Part of the 30S ribosomal subunit.

The protein localises to the plastid. It localises to the chloroplast. The sequence is that of Small ribosomal subunit protein uS3c (rps3) from Amborella trichopoda.